A 210-amino-acid chain; its full sequence is Na(+)-translocating NADH-quinone reductase subunit D (210 aa).

5 helical membrane-spanning segments follow: residues 42–62 (FVMTLAVTFVTALSNFSVSLI), 72–92 (IIVQMAIIASLVIVVDQVLKA), 103–123 (VFVGLIITNCIVMGRAEAFAM), 131–151 (LIDGIGNGLGYGFVLITVGFF), and 178–198 (NGLMLLAPSAFFLIGFLIWVI).

The protein belongs to the NqrDE/RnfAE family. In terms of assembly, composed of six subunits; NqrA, NqrB, NqrC, NqrD, NqrE and NqrF.

The protein resides in the cell inner membrane. The enzyme catalyses a ubiquinone + n Na(+)(in) + NADH + H(+) = a ubiquinol + n Na(+)(out) + NAD(+). NQR complex catalyzes the reduction of ubiquinone-1 to ubiquinol by two successive reactions, coupled with the transport of Na(+) ions from the cytoplasm to the periplasm. NqrA to NqrE are probably involved in the second step, the conversion of ubisemiquinone to ubiquinol. The polypeptide is Na(+)-translocating NADH-quinone reductase subunit D (Vibrio campbellii (strain ATCC BAA-1116)).